The following is a 485-amino-acid chain: Isocitrate dehydrogenase [NADP], chloroplastic/mitochondrial (485 aa).

The transit peptide at 1-65 (MLNKLTHGVF…VQFHRASAVR (65 aa)) directs the protein to the chloroplast and mitochondrion. Residues 147-149 (TIT) and Arg154 contribute to the NADP(+) site. Substrate is bound at residue Thr149. Residues 166–172 (SPNGTIR), Arg181, and Arg204 each bind substrate. Mn(2+) is bound at residue Asp323. Position 331 (Lys331) interacts with NADP(+). Mn(2+) is bound at residue Asp346. NADP(+) is bound by residues 381–386 (GTVTRH) and Asn399.

The protein belongs to the isocitrate and isopropylmalate dehydrogenases family. The cofactor is Mg(2+). Mn(2+) is required as a cofactor.

The protein resides in the plastid. The protein localises to the chloroplast. It localises to the mitochondrion. The catalysed reaction is D-threo-isocitrate + NADP(+) = 2-oxoglutarate + CO2 + NADPH. Functionally, may be involved in response to oxidative stresses. The sequence is that of Isocitrate dehydrogenase [NADP], chloroplastic/mitochondrial from Arabidopsis thaliana (Mouse-ear cress).